The sequence spans 706 residues: Lysophospholipase 2 (706 aa).

The first 19 residues, 1–19 (MQLRNILQASSLISGLSLA), serve as a signal peptide directing secretion. A PLA2c domain is found at 36–588 (PCPSDDTSLV…ADYCWNGTLS (553 aa)). N-linked (GlcNAc...) asparagine glycosylation is found at N47, N80, N94, N125, N162, N181, N193, N217, N279, N309, N365, N390, N491, N515, N524, N543, N567, N584, N598, N630, N634, N642, N648, N652, and N658. The tract at residues 627 to 672 (TSGNTTSNSTTSTSSNVTSNSNSSSNTTLNSNSSSSSISSSTARSS) is disordered. N680 carries the GPI-anchor amidated asparagine lipid modification. A propeptide spans 681–706 (AAAISYANTNTLMSLLGAITALFGLI) (removed in mature form).

Belongs to the lysophospholipase family. Post-translationally, the GPI-anchor is attached to the protein in the endoplasmic reticulum and serves to target the protein to the cell surface. There, the glucosamine-inositol phospholipid moiety is cleaved off and the GPI-modified mannoprotein is covalently attached via its lipidless GPI glycan remnant to the 1,6-beta-glucan of the outer cell wall layer.

It is found in the secreted. Its subcellular location is the cell wall. The protein resides in the membrane. The catalysed reaction is a 1-acyl-sn-glycero-3-phosphocholine + H2O = sn-glycerol 3-phosphocholine + a fatty acid + H(+). It catalyses the reaction 1-hexadecanoyl-sn-glycero-3-phosphoethanolamine + H2O = sn-glycero-3-phosphoethanolamine + hexadecanoate + H(+). It carries out the reaction 1-hexadecanoyl-sn-glycero-3-phosphocholine + H2O = sn-glycerol 3-phosphocholine + hexadecanoate + H(+). The enzyme catalyses 1-hexadecanoyl-sn-glycero-3-phospho-L-serine + H2O = sn-glycero-3-phospho-L-serine + hexadecanoate + H(+). The catalysed reaction is 1,2-dihexadecanoyl-sn-glycero-3-phosphocholine + H2O = 1-hexadecanoyl-sn-glycero-3-phosphocholine + hexadecanoate + H(+). In terms of biological role, sequentially removes both fatty acyl groups from diacylglycerophospholipids and therefore has both phospholipase A and lysophospholipase activities. However, it does not display transacylase activity. Substrate preference is phosphatidylserine &gt; phosphatidylinositol &gt; phosphatidylcholine &gt; phosphatidylethanolamine. The substrate specificity is pH- and ion-dependent. In contrast with activities observed at optimum pH 3.5, the order of substrate preference at pH 5.5 is phosphatidylserine = phosphatidylethanolamine &gt; phosphatidylcholine &gt; phosphatidylinositol. The protein is Lysophospholipase 2 (PLB2) of Saccharomyces cerevisiae (strain ATCC 204508 / S288c) (Baker's yeast).